A 238-amino-acid chain; its full sequence is Tetraspanin-8 (238 aa).

The Cytoplasmic segment spans residues M1–K9. A helical transmembrane segment spans residues C10–I33. At R34–N57 the chain is on the extracellular side. A helical membrane pass occupies residues I58 to L72. Residues G73–F83 are Cytoplasmic-facing. A helical transmembrane segment spans residues M84–R109. Over K110 to R206 the chain is Extracellular. An N-linked (GlcNAc...) asparagine glycan is attached at N118. A helical transmembrane segment spans residues L207–L231. Residues Y232–K238 lie on the Cytoplasmic side of the membrane.

Belongs to the tetraspanin (TM4SF) family. Forms homooligomers. Interacts with MEP1B. Interacts with integrin alpha3/ITGA3. Interacts with RICTOR and MTOR. Interacts with ADAM17. Interacts with ECE1.

It localises to the cell membrane. Structural component of specialized membrane microdomains known as tetraspanin-enriched microdomains (TERMs), which act as platforms for receptor clustering and signaling. Participates thereby in diverse biological functions such as cell signal transduction, migration and protein trafficking. Promotes ADAM17-mediated TNF-alpha processing through recruitment of ADAM17 to tetraspanin-enriched micro-domains (TEMs). Forms a complex with RICTOR and integrin alpha3/ITGA3 to mediate mTORC2 activation and AKT1 phosphorylation leading to cell migration. Reduces apoptosis and autophagy induced by high glucose levels through forming a complex with mTOR and RICTOR. Contributes to the maintenance of intestinal epithelial barrier and plays a role in the regulation of intestine inflammation by switching interferon gamma receptor 1/IFNGR1 from clathrin-dependent to lipid raft-dependent endocytosis route to limit STAT1 activation magnitude and duration. Acts as a modulator of the endothelin axis by associating with endothelin converting enzyme ECE1 and regulating its activity of conversion of the endothelin-1 precursor to endothelin. This Bos taurus (Bovine) protein is Tetraspanin-8 (TSPAN8).